We begin with the raw amino-acid sequence, 494 residues long: tRNA (guanine(37)-N(1))-methyltransferase (494 aa).

Residues 1–32 constitute a mitochondrion transit peptide; that stretch reads MRIRRILYFYGNLPNTYTANVLRRLAFSCWHT. S-adenosyl-L-methionine is bound by residues histidine 278, 316–317, 344–345, and asparagine 377; these read DL and DG. A disordered region spans residues 468–494; that stretch reads DTGEPESKRPRTAEAFPLPHVQQSRNS.

This sequence belongs to the class I-like SAM-binding methyltransferase superfamily. TRM5/TYW2 family. As to quaternary structure, monomer.

Its subcellular location is the mitochondrion matrix. It is found in the nucleus. It localises to the cytoplasm. The catalysed reaction is guanosine(37) in tRNA + S-adenosyl-L-methionine = N(1)-methylguanosine(37) in tRNA + S-adenosyl-L-homocysteine + H(+). In terms of biological role, involved in mitochondrial tRNA methylation. Specifically methylates the N1 position of guanosine-37 in various tRNAs. Methylation is not dependent on the nature of the nucleoside 5' of the target nucleoside. This is the first step in the biosynthesis of wybutosine (yW), a modified base adjacent to the anticodon of tRNAs and required for accurate decoding. The protein is tRNA (guanine(37)-N(1))-methyltransferase (trmt5) of Xenopus tropicalis (Western clawed frog).